A 160-amino-acid chain; its full sequence is NADH-quinone oxidoreductase subunit B (160 aa).

Positions 37, 38, 102, and 132 each coordinate [4Fe-4S] cluster.

This sequence belongs to the complex I 20 kDa subunit family. As to quaternary structure, NDH-1 is composed of 14 different subunits. Subunits NuoB, C, D, E, F, and G constitute the peripheral sector of the complex. The cofactor is [4Fe-4S] cluster.

The protein resides in the cell inner membrane. The enzyme catalyses a quinone + NADH + 5 H(+)(in) = a quinol + NAD(+) + 4 H(+)(out). Its function is as follows. NDH-1 shuttles electrons from NADH, via FMN and iron-sulfur (Fe-S) centers, to quinones in the respiratory chain. Couples the redox reaction to proton translocation (for every two electrons transferred, four hydrogen ions are translocated across the cytoplasmic membrane), and thus conserves the redox energy in a proton gradient. In Cupriavidus pinatubonensis (strain JMP 134 / LMG 1197) (Cupriavidus necator (strain JMP 134)), this protein is NADH-quinone oxidoreductase subunit B.